The following is a 50-amino-acid chain: uncharacterized protein (50 aa).

The protein resides in the mitochondrion. This is an uncharacterized protein from Saccharomyces cerevisiae (strain ATCC 204508 / S288c) (Baker's yeast).